The sequence spans 141 residues: Hemoglobin subunit alpha-A (141 aa).

The Globin domain maps to valine 1–arginine 141. Position 58 (histidine 58) interacts with O2. Histidine 87 contacts heme b.

The protein belongs to the globin family. In terms of assembly, heterotetramer of two alpha chains and two beta chains. In terms of tissue distribution, red blood cells.

In terms of biological role, involved in oxygen transport from the lung to the various peripheral tissues. In Drymarchon melanurus erebennus (Texas indigo snake), this protein is Hemoglobin subunit alpha-A.